The chain runs to 309 residues: Hydroxyacylglutathione hydrolase, mitochondrial (309 aa).

A mitochondrion-targeting transit peptide spans 1–24 (MVLGRGSLCLRSLSALGATCARRG). Lys-90 is modified (N6-acetyllysine). Zn(2+)-binding residues include His-103, His-105, Asp-107, and His-108. Residue Lys-117 is modified to N6-acetyllysine. His-159 and Asp-183 together coordinate Zn(2+). Substrate contacts are provided by residues 192–194 (KFY) and 222–224 (HEY). Position 222 (His-222) interacts with Zn(2+). Residue Lys-230 is modified to N6-acetyllysine; alternate. Residue Lys-230 is modified to N6-succinyllysine; alternate. 298 to 301 (RREK) contributes to the substrate binding site.

This sequence belongs to the metallo-beta-lactamase superfamily. Glyoxalase II family. In terms of assembly, monomer. It depends on Zn(2+) as a cofactor.

The protein localises to the mitochondrion matrix. It localises to the cytoplasm. It catalyses the reaction an S-(2-hydroxyacyl)glutathione + H2O = a 2-hydroxy carboxylate + glutathione + H(+). It carries out the reaction (R)-S-lactoylglutathione + H2O = (R)-lactate + glutathione + H(+). The protein operates within secondary metabolite metabolism; methylglyoxal degradation; (R)-lactate from methylglyoxal: step 2/2. Thiolesterase that catalyzes the hydrolysis of S-D-lactoyl-glutathione to form glutathione and D-lactic acid. The polypeptide is Hydroxyacylglutathione hydrolase, mitochondrial (Hagh) (Mus musculus (Mouse)).